A 1151-amino-acid chain; its full sequence is Zinc finger protein ZFPM2 (1151 aa).

A compositionally biased stretch (basic residues) spans Met1–Lys13. Residues Met1–Glu102 are disordered. Acidic residues-rich tracts occupy residues Asp18 to Asp33 and Glu70 to Thr82. The CCHC FOG-type 1 zinc finger occupies Ile244–Gln277. The Zn(2+) site is built by Cys252, Cys255, His268, and Cys273. Residues Ser296 to His320 form a C2H2-type 1 zinc finger. A Glycyl lysine isopeptide (Lys-Gly) (interchain with G-Cter in SUMO1) cross-link involves residue Lys324. 2 consecutive C2H2-type zinc fingers follow at residues Leu335–His357 and Phe363–His385. The segment at Gly389–Asn487 is disordered. Composition is skewed to polar residues over residues Pro401 to Pro410 and Glu419 to Asp431. A Glycyl lysine isopeptide (Lys-Gly) (interchain with G-Cter in SUMO2) cross-link involves residue Lys444. A compositionally biased stretch (polar residues) spans Leu447–Gln485. Residue Lys471 forms a Glycyl lysine isopeptide (Lys-Gly) (interchain with G-Cter in SUMO1) linkage. A Phosphoserine modification is found at Ser532. A CCHC FOG-type 2 zinc finger spans residues Pro542–Trp575. Cys550, Cys553, His566, and Cys571 together coordinate Zn(2+). Ser581 carries the post-translational modification Phosphoserine. A disordered region spans residues Gly636–Asp683. A compositionally biased stretch (polar residues) spans Ser647 to Asn658. A CCHC FOG-type 3 zinc finger spans residues Glu681 to His714. Zn(2+) is bound by residues Cys689, Cys692, His705, and Cys710. A Nuclear localization signal motif is present at residues Arg736 to Lys740. An interaction with CTBP2 region spans residues Pro829–Lys835. The CCHC FOG-type 4 zinc finger occupies Lys848–Ala881. The Zn(2+) site is built by Cys856, Cys859, His872, and Cys877. Residue Ser904 is modified to Phosphoserine. Glycyl lysine isopeptide (Lys-Gly) (interchain with G-Cter in SUMO1) cross-links involve residues Lys915 and Lys955. Position 1014 is a phosphoserine (Ser1014). The interval Asp1051–Pro1095 is disordered. Polar residues predominate over residues Asn1057–Pro1067. The CCHC FOG-type 5 zinc finger occupies Gln1113–Ala1146. Positions 1121, 1124, 1137, and 1142 each coordinate Zn(2+).

This sequence belongs to the FOG (Friend of GATA) family. Interacts with the N-terminal zinc-finger of GATA4, GATA5 and probably GATA6. Interacts with retinoid nuclear receptor RXRA when ligand bound. Interacts with corepressor CTBP2; this interaction is however not essential for corepressor activity. Able to bind GATA1 in vitro. Interacts with NR2F2 and NR2F6. Interacts with ATOH8; mediates indirect interaction with GATA4. Sumoylation reduces transcriptional repression activity. As to expression, widely expressed at low level.

Its subcellular location is the nucleus. In terms of biological role, transcription regulator that plays a central role in heart morphogenesis and development of coronary vessels from epicardium, by regulating genes that are essential during cardiogenesis. Essential cofactor that acts via the formation of a heterodimer with transcription factors of the GATA family GATA4, GATA5 and GATA6. Such heterodimer can both activate or repress transcriptional activity, depending on the cell and promoter context. Also required in gonadal differentiation, possibly be regulating expression of SRY. Probably acts a corepressor of NR2F2. This chain is Zinc finger protein ZFPM2 (ZFPM2), found in Homo sapiens (Human).